The primary structure comprises 721 residues: Polyphosphate kinase (721 aa).

Asparagine 54 lines the ATP pocket. 2 residues coordinate Mg(2+): arginine 379 and arginine 409. In terms of domain architecture, PLD phosphodiesterase spans 434-468; the sequence is THLKTHSKIALVVKRIGGELTSFVHLGTGNYNDKT. Histidine 439 serves as the catalytic Phosphohistidine intermediate. Residues tyrosine 472, arginine 568, and histidine 596 each coordinate ATP.

The protein belongs to the polyphosphate kinase 1 (PPK1) family. Mg(2+) is required as a cofactor. In terms of processing, an intermediate of this reaction is the autophosphorylated ppk in which a phosphate is covalently linked to a histidine residue through a N-P bond.

It catalyses the reaction [phosphate](n) + ATP = [phosphate](n+1) + ADP. In terms of biological role, catalyzes the reversible transfer of the terminal phosphate of ATP to form a long-chain polyphosphate (polyP). This is Polyphosphate kinase from Staphylococcus haemolyticus (strain JCSC1435).